The sequence spans 390 residues: Succinate--CoA ligase [ADP-forming] subunit beta (390 aa).

In terms of domain architecture, ATP-grasp spans 9–248 (KDILRKFGVS…ISEEDPFEVE (240 aa)). ATP-binding positions include K50, 57–59 (GRG), E103, M106, and E111. Mg(2+) contacts are provided by N203 and D217. Residues N268 and 325–327 (GIV) contribute to the substrate site.

The protein belongs to the succinate/malate CoA ligase beta subunit family. As to quaternary structure, heterotetramer of two alpha and two beta subunits. Requires Mg(2+) as cofactor.

It catalyses the reaction succinate + ATP + CoA = succinyl-CoA + ADP + phosphate. It carries out the reaction GTP + succinate + CoA = succinyl-CoA + GDP + phosphate. It functions in the pathway carbohydrate metabolism; tricarboxylic acid cycle; succinate from succinyl-CoA (ligase route): step 1/1. Functionally, succinyl-CoA synthetase functions in the citric acid cycle (TCA), coupling the hydrolysis of succinyl-CoA to the synthesis of either ATP or GTP and thus represents the only step of substrate-level phosphorylation in the TCA. The beta subunit provides nucleotide specificity of the enzyme and binds the substrate succinate, while the binding sites for coenzyme A and phosphate are found in the alpha subunit. In Prosthecochloris aestuarii (strain DSM 271 / SK 413), this protein is Succinate--CoA ligase [ADP-forming] subunit beta.